A 730-amino-acid chain; its full sequence is Arginine decarboxylase 1B, chloroplastic (730 aa).

The N-terminal 37 residues, 1 to 37, are a transit peptide targeting the chloroplast; that stretch reads MPALGCCVDAAVSPPPGYSFLWDSSLPAPEIFPSGVP. At K157 the chain carries N6-(pyridoxal phosphate)lysine. Residues S309, G346, and 395–398 each bind pyridoxal 5'-phosphate; that span reads ESGR. Residue 460 to 461 coordinates substrate; the sequence is YA. C548 (proton donor; shared with dimeric partner) is an active-site residue. Residue D549 participates in substrate binding. Y590 serves as a coordination point for pyridoxal 5'-phosphate.

It belongs to the Orn/Lys/Arg decarboxylase class-II family. SpeA subfamily. It depends on Mg(2+) as a cofactor. Requires pyridoxal 5'-phosphate as cofactor.

The protein resides in the plastid. Its subcellular location is the chloroplast. The enzyme catalyses L-arginine + H(+) = agmatine + CO2. It participates in alkaloid biosynthesis; nicotine biosynthesis. Its pathway is amine and polyamine biosynthesis; agmatine biosynthesis; agmatine from L-arginine: step 1/1. Functionally, involved in the biosynthesis of pyridine alkaloid natural products, leading mainly to the production of anabasine, anatabine, nicotine and nornicotine, effective deterrents against herbivores with antiparasitic and pesticide properties (neurotoxins); nornicotine serves as the precursor in the synthesis of the carcinogen compound N'-nitrosonornicotine (NNN). Required for the biosynthesis of putrescine. Catalyzes the first step of polyamine (PA) biosynthesis to produce putrescine from arginine. The polypeptide is Arginine decarboxylase 1B, chloroplastic (Nicotiana tabacum (Common tobacco)).